We begin with the raw amino-acid sequence, 221 residues long: uncharacterized protein (221 aa).

Residues 1–22 (MGLDNFTAPSTGTTPAGSPFLR) are disordered. Residues 7–16 (TAPSTGTTPA) show a composition bias toward polar residues.

This sequence belongs to the IIV-6 259R family.

This is an uncharacterized protein from Invertebrate iridescent virus 3 (IIV-3).